The chain runs to 293 residues: tRNA pseudouridine synthase B (293 aa).

D38 acts as the Nucleophile in catalysis.

Belongs to the pseudouridine synthase TruB family. Type 1 subfamily.

It catalyses the reaction uridine(55) in tRNA = pseudouridine(55) in tRNA. Responsible for synthesis of pseudouridine from uracil-55 in the psi GC loop of transfer RNAs. The polypeptide is tRNA pseudouridine synthase B (Nostoc sp. (strain PCC 7120 / SAG 25.82 / UTEX 2576)).